The sequence spans 409 residues: Pectin acetylesterase 4 (409 aa).

The N-terminal stretch at 1 to 32 (MVIRSLLQCRTWSKSDWLLASIGIVLIVYSFS) is a signal peptide. Residues Asn36 and Asn163 are each glycosylated (N-linked (GlcNAc...) asparagine). Active-site charge relay system residues include Ser199, Asp295, and His362. 2 N-linked (GlcNAc...) asparagine glycosylation sites follow: Asn379 and Asn406.

This sequence belongs to the pectinacetylesterase family.

Its subcellular location is the secreted. The protein localises to the cell wall. In terms of biological role, hydrolyzes acetyl esters in homogalacturonan regions of pectin. In type I primary cell wall, galacturonic acid residues of pectin can be acetylated at the O-2 and O-3 positions. Decreasing the degree of acetylation of pectin gels in vitro alters their physical properties. The polypeptide is Pectin acetylesterase 4 (Arabidopsis thaliana (Mouse-ear cress)).